The following is a 259-amino-acid chain: PKHD-type hydroxylase PsycPRwf_1523 (259 aa).

The Fe2OG dioxygenase domain maps to 80 to 180 (VIMPPLFSAY…RLAMVTWVQS (101 aa)). Fe cation contacts are provided by H98, D100, and H161. R171 contributes to the 2-oxoglutarate binding site.

It depends on Fe(2+) as a cofactor. The cofactor is L-ascorbate.

This is PKHD-type hydroxylase PsycPRwf_1523 from Psychrobacter sp. (strain PRwf-1).